Here is a 1441-residue protein sequence, read N- to C-terminus: Remodeling and spacing factor 1 (1441 aa).

The 68-residue stretch at 17-84 folds into the DDT domain; it reads PGSCPNFAVV…MRKIGKSVTA (68 aa). Glycyl lysine isopeptide (Lys-Gly) (interchain with G-Cter in SUMO2) cross-links involve residues K136 and K215. The segment covering 215–227 has biased composition (polar residues); that stretch reads KNSSQQDNSSRES. The disordered stretch occupies residues 215-283; that stretch reads KNSSQQDNSS…TTVKKEKEDE (69 aa). Residue S227 is modified to Phosphoserine. 2 stretches are compositionally biased toward basic and acidic residues: residues 234–257 and 274–283; these read ETKK…KSEE and TTVKKEKEDE. Glycyl lysine isopeptide (Lys-Gly) (interchain with G-Cter in SUMO2) cross-links involve residues K236, K243, K248, K252, and K254. Residue K277 forms a Glycyl lysine isopeptide (Lys-Gly) (interchain with G-Cter in SUMO1); alternate linkage. K277 participates in a covalent cross-link: Glycyl lysine isopeptide (Lys-Gly) (interchain with G-Cter in SUMO2); alternate. Residues K284, K288, K294, K305, K306, K309, K323, K327, K337, K342, K358, K373, K381, and K390 each participate in a glycyl lysine isopeptide (Lys-Gly) (interchain with G-Cter in SUMO2) cross-link. Residues 330–340 show a composition bias toward basic and acidic residues; that stretch reads RADPKDTKSSM. The segment at 330-385 is disordered; that stretch reads RADPKDTKSSMEKPVAQEPERIEFGGNIKSSHEITEKSTEETEKLKNDQQAKIPLK. Residues 359-378 show a composition bias toward basic and acidic residues; sequence SSHEITEKSTEETEKLKNDQ. Phosphoserine occurs at positions 392 and 397. Residues K400, K405, K415, and K419 each participate in a glycyl lysine isopeptide (Lys-Gly) (interchain with G-Cter in SUMO2) cross-link. S429 is modified (phosphoserine). K439 is covalently cross-linked (Glycyl lysine isopeptide (Lys-Gly) (interchain with G-Cter in SUMO2)). K456 participates in a covalent cross-link: Glycyl lysine isopeptide (Lys-Gly) (interchain with G-Cter in SUMO1); alternate. A Glycyl lysine isopeptide (Lys-Gly) (interchain with G-Cter in SUMO2); alternate cross-link involves residue K456. Residues K463 and K468 each participate in a glycyl lysine isopeptide (Lys-Gly) (interchain with G-Cter in SUMO2) cross-link. The segment covering 467 to 480 has biased composition (basic and acidic residues); that stretch reads TKEESYSPSKDRNI. The disordered stretch occupies residues 467–634; that stretch reads TKEESYSPSK…AAETSPPSNI (168 aa). A Phosphoserine modification is found at S473. Positions 482-498 are enriched in polar residues; the sequence is TEGNGTESLNSVITSMK. Residue K498 forms a Glycyl lysine isopeptide (Lys-Gly) (interchain with G-Cter in SUMO2) linkage. Residues 500–514 are compositionally biased toward basic and acidic residues; the sequence is GELEKETAPLRKDAD. Phosphoserine is present on S524. The segment covering 552 to 562 has biased composition (polar residues); the sequence is SKTALSSTESC. A Glycyl lysine isopeptide (Lys-Gly) (interchain with G-Cter in SUMO2) cross-link involves residue K565. The span at 565–601 shows a compositional bias: basic and acidic residues; the sequence is KGEEKSPKTKKDKRPPILECLEKLEKSKKTFLDKDAQ. Residues S570 and S604 each carry the phosphoserine modification. Positions 609-621 are enriched in basic and acidic residues; the sequence is EVPKSTLESEKPG. A Phosphoserine modification is found at S622. Phosphothreonine is present on T628. S629 carries the phosphoserine modification. Residues K662, K663, K670, K677, K698, and K709 each participate in a glycyl lysine isopeptide (Lys-Gly) (interchain with G-Cter in SUMO2) cross-link. Positions 675 to 887 are disordered; the sequence is FTKVEMDNLD…EEKESEEAIL (213 aa). The residue at position 748 (S748) is a Phosphoserine. Composition is skewed to basic and acidic residues over residues 753-770, 789-802, and 816-831; these read LEPE…EKTN, AEIR…KRGE, and KTDK…KDTN. Glycyl lysine isopeptide (Lys-Gly) (interchain with G-Cter in SUMO2) cross-links involve residues K758, K768, K795, and K799. Over residues 864–873 the composition is skewed to low complexity; the sequence is GSGSEKSSAA. Residues 874 to 887 show a composition bias toward acidic residues; sequence SEEEEEKESEEAIL. A Phosphoserine modification is found at S882. The PHD-type zinc-finger motif lies at 891-941; sequence DEPCKKCGLPNHPELILLCDSCDSGYHTACLRPPLMIIPDGEWFCPPCQHK. Positions 942–1012 form a coiled coil; the sequence is LLCEKLEEQL…SKANLLERRS (71 aa). A disordered region spans residues 983 to 1007; that stretch reads PPQEPDFSEDQEEKKKDSKKSKANL. K1039 participates in a covalent cross-link: Glycyl lysine isopeptide (Lys-Gly) (interchain with G-Cter in SUMO2). K1050 is subject to N6-acetyllysine. The disordered stretch occupies residues 1063–1428; the sequence is ISTILDEERK…EEEEDELLRV (366 aa). Composition is skewed to acidic residues over residues 1094–1107 and 1120–1141; these read LDSD…ESED and VVSD…DSDT. S1096, S1098, and S1105 each carry phosphoserine. The span at 1146 to 1169 shows a compositional bias: basic residues; it reads RRLRRHPSRPMRQSRRLRRKTPKK. The segment covering 1189–1199 has biased composition (acidic residues); the sequence is SDFSDDFSDDF. Basic residues predominate over residues 1203-1212; that stretch reads RRRRSRRNQK. S1221, S1223, and S1226 each carry phosphoserine. A compositionally biased stretch (basic residues) spans 1229–1244; it reads SLRRGKEIRRVHKRRL. Phosphoserine occurs at positions 1258 and 1277. A Phosphothreonine modification is found at T1278. The span at 1280-1292 shows a compositional bias: acidic residues; that stretch reads EYSEADEEEEEEE. T1305 is modified (phosphothreonine). Phosphoserine is present on residues S1325 and S1336. Residues 1335–1344 are compositionally biased toward basic and acidic residues; that stretch reads ESTKKPYRIE. K1339 is subject to N6-acetyllysine. Phosphoserine occurs at positions 1345, 1359, and 1375. The segment covering 1394–1408 has biased composition (polar residues); that stretch reads PKDNSTASASLASNG.

Component of the RSF-1 ISWI chromatin-remodeling complex at least composed of SMARCA1 and RSF1. Within the RSF-1 ISWI chromatin-remodeling complex interacts with SMARCA1. Component of the RSF-5 ISWI chromatin-remodeling complex (also called the RSF complex) at least composed of SMARCA5/SNF2H and RSF1. Within the RSF-5 ISWI chromatin-remodeling complex interacts with SMARCA5/SNF2H; the interaction is direct. Identified in a centromere complex containing histones H2A, H2B and H4, and at least CENPA, CENPB, CENPC, CENPT, CENPN, HJURP, SUPT16H, SSRP1 and RSF1. Also binds the HBV pX/HBx protein, which is required to activate transcription of the viral genome. Phosphorylated. Ubiquitously expressed. Highly expressed in the heart, skeletal muscle, kidney and placenta. Expressed at low levels in the brain and colon.

The protein localises to the nucleus. Its function is as follows. Regulatory subunit of the ATP-dependent RSF-1 and RSF-5 ISWI chromatin-remodeling complexes, which form ordered nucleosome arrays on chromatin and facilitate access to DNA during DNA-templated processes such as DNA replication, transcription, and repair. Binds to core histones together with SMARCA5, and is required for the assembly of regular nucleosome arrays by the RSF-5 ISWI chromatin-remodeling complex. Directly stimulates the ATPase activity of SMARCA1 and SMARCA5 in the RSF-1 and RSF-5 ISWI chromatin-remodeling complexes, respectively. The RSF-1 ISWI chromatin remodeling complex has a lower ATP hydrolysis rate than the RSF-5 ISWI chromatin-remodeling complex. The complexes do not have the ability to slide mononucleosomes to the center of a DNA template. Facilitates transcription of hepatitis B virus (HBV) genes by the pX transcription activator. In case of infection by HBV, together with pX, it represses TNF-alpha induced NF-kappa-B transcription activation. Represses transcription when artificially recruited to chromatin by fusion to a heterogeneous DNA binding domain. The chain is Remodeling and spacing factor 1 (RSF1) from Homo sapiens (Human).